The sequence spans 137 residues: Flagellar basal body rod protein FlgB (137 aa).

Belongs to the flagella basal body rod proteins family. In terms of assembly, the basal body constitutes a major portion of the flagellar organelle and consists of a number of rings mounted on a central rod. In Gram-negative bacteria, at least four rings, L, P, S and M are present, whereas Gram-positive bacteria lack the L and P rings. The rod consists of about 26 subunits of FlgG in the distal portion, and FlgB, FlgC and FlgF build up the proximal portion of the rod with about 6 subunits each. Rod assembly occurs by export via the flagellum-specific pathway of its constituent proteins and by their incorporation into the rod structure in the probable order of FlgB, FlgC, FlgF and FlgG. Another protein, FliE, also assembles onto the stable rod structure.

The protein resides in the bacterial flagellum basal body. Structural component of flagellum, the bacterial motility apparatus. Part of the rod structure of flagellar basal body. This Yersinia ruckeri protein is Flagellar basal body rod protein FlgB.